Reading from the N-terminus, the 440-residue chain is Origin recognition complex subunit 4 (440 aa).

64–71 serves as a coordination point for ATP; that stretch reads GPKGSGKS.

This sequence belongs to the ORC4 family. As to quaternary structure, ORC is composed of six subunits.

It localises to the nucleus. Its function is as follows. Component of the origin recognition complex (ORC) that binds origins of replication. DNA-binding is ATP-dependent, however specific DNA sequences that define origins of replication have not been identified so far. ORC is required to assemble the pre-replication complex necessary to initiate DNA replication. This chain is Origin recognition complex subunit 4 (orcD), found in Dictyostelium discoideum (Social amoeba).